We begin with the raw amino-acid sequence, 395 residues long: Aspergillopepsin-1 (395 aa).

A signal peptide spans 1–20; that stretch reads MVVFSKVTAVVVGLSTIVSA. Residues 21 to 70 constitute a propeptide, activation peptide; sequence VPVVQPRKGFTINQVARPVTNKKTVNLPAVYANALTKYGGTVPDSVKAAA. A Peptidase A1 domain is found at 86-392; the sequence is YLTPVKVGGT…DSQGPRLGFA (307 aa). Residues D102 and D284 contribute to the active site. Residues C320 and C355 are joined by a disulfide bond.

Belongs to the peptidase A1 family. Monomer.

The protein localises to the secreted. The catalysed reaction is Hydrolysis of proteins with broad specificity. Generally favors hydrophobic residues in P1 and P1', but also accepts Lys in P1, which leads to activation of trypsinogen. Does not clot milk.. Its function is as follows. Secreted aspartic endopeptidase that allows assimilation of proteinaceous substrates. The scissile peptide bond is attacked by a nucleophilic water molecule activated by two aspartic residues in the active site. Shows a broad primary substrate specificity. Favors hydrophobic residues at the P1 and P1' positions, but also accepts a lysine residue in the P1 position, leading to the activation of trypsinogen and chymotrypsinogen A. The protein is Aspergillopepsin-1 (pepA) of Aspergillus fumigatus (strain CBS 144.89 / FGSC A1163 / CEA10) (Neosartorya fumigata).